Reading from the N-terminus, the 52-residue chain is Light-harvesting protein B-880 alpha chain (52 aa).

Topologically, residues 1-12 (MWKVWLLFDPRR) are cytoplasmic. A helical transmembrane segment spans residues 13–33 (TLVALFTFLFVLALLIHFILL). Residue H29 coordinates a bacteriochlorophyll. The Periplasmic segment spans residues 34–52 (STDRFNWMQGAPTAPAQTS).

Belongs to the antenna complex alpha subunit family. The core complex is formed by different alpha and beta chains, binding bacteriochlorophyll molecules, and arranged most probably in tetrameric structures disposed around the reaction center. The non-pigmented gamma chains may constitute additional components.

Its subcellular location is the cell inner membrane. In terms of biological role, antenna complexes are light-harvesting systems, which transfer the excitation energy to the reaction centers. This is Light-harvesting protein B-880 alpha chain from Afifella marina (Rhodobium marinum).